Consider the following 1902-residue polypeptide: Putative surface cell antigen sca1 (1902 aa).

Positions 1 to 28 (MNKLTEQHLLKKSRFLKYSLLASISVGA) are cleaved as a signal peptide. 5 disordered regions span residues 140 to 273 (GIEK…TFVP), 420 to 485 (QGVF…SRTA), 707 to 729 (TTTT…YSSS), 858 to 885 (NRRR…AWGN), and 1470 to 1548 (KSES…SDGD). Composition is skewed to polar residues over residues 146–159 (QSQN…TEQM) and 168–197 (TASS…SPEH). Over residues 199–212 (TTAPGTPSSTPATP) the composition is skewed to low complexity. The segment covering 225–238 (LGANTPPNINTNSK) has biased composition (polar residues). The span at 246–264 (SSSGPQQQAVQSSSQVKSE) shows a compositional bias: low complexity. Residues 423 to 439 (FNKNKSSGGNARKSSAG) show a composition bias toward polar residues. Residues 445 to 482 (KKQEAQKQLSEIKKQEKAIKTASDKAKEVAASAKKETS) show a composition bias toward basic and acidic residues. Basic and acidic residues predominate over residues 863–874 (RDGETSKQRTVD). A compositionally biased stretch (low complexity) spans 1491-1507 (LSSLPALASSNESALAL). Over residues 1521–1538 (SSEDEESYDSGFEEEEET) the composition is skewed to acidic residues. An Autotransporter domain is found at 1618–1902 (ESHIKRGLWM…QGSVKLKVNL (285 aa)).

Its subcellular location is the cell outer membrane. The protein is Putative surface cell antigen sca1 (sca1) of Rickettsia conorii (strain ATCC VR-613 / Malish 7).